A 321-amino-acid polypeptide reads, in one-letter code: Serpentine receptor class delta-63 (321 aa).

7 consecutive transmembrane segments (helical) span residues 14–34, 41–61, 83–103, 128–148, 190–208, 240–260, and 273–293; these read LVYM…YNFT, VKYF…MAFA, YIGP…GIVV, LWTL…IVII, AAMS…GTYW, NFQI…YFMI, and TITV…IYFI.

It belongs to the nematode receptor-like protein srd family.

The protein resides in the membrane. This chain is Serpentine receptor class delta-63 (srd-63), found in Caenorhabditis elegans.